The sequence spans 1153 residues: Probable RNA-dependent RNA polymerase 3 (1153 aa).

Belongs to the RdRP family. As to expression, expressed in shoot apical meristem (SAM) and panicles.

The enzyme catalyses RNA(n) + a ribonucleoside 5'-triphosphate = RNA(n+1) + diphosphate. Probably involved in the RNA silencing pathway and required for the generation of small interfering RNAs (siRNAs). The protein is Probable RNA-dependent RNA polymerase 3 (RDR3) of Oryza sativa subsp. japonica (Rice).